The chain runs to 3038 residues: Lovastatin nonaketide synthase, polyketide synthase component (3038 aa).

Residues Asn-8–Glu-447 form the Ketosynthase family 3 (KS3) domain. Catalysis depends on for beta-ketoacyl synthase activity residues Cys-181, His-320, and His-367. A malonyl-CoA:ACP transacylase (MAT) domain region spans residues Ile-562–Arg-889. Ser-656 functions as the For malonyltransferase activity in the catalytic mechanism. The lovC-binding stretch occupies residues Ala-695–Lys-757. The segment at His-953–Val-1089 is N-terminal hotdog fold. The segment at His-953–Pro-1263 is dehydratase (DH) domain. Positions His-953–Ser-1267 constitute a PKS/mFAS DH domain. His-985 acts as the Proton acceptor; for dehydratase activity in catalysis. Positions Glu-1107 to Ser-1267 are C-terminal hotdog fold. Residue Asp-1174 is the Proton donor; for dehydratase activity of the active site. Residues Leu-1443–Gln-1543 are methyltransferase (CMet) domain. Positions Thr-2139–Ala-2437 are ketoreductase (KR) domain. The Carrier domain occupies Gln-2463–Leu-2538. At Ser-2498 the chain carries O-(pantetheine 4'-phosphoryl)serine. The disordered stretch occupies residues Val-2546–Pro-2602. Acidic residues predominate over residues Ser-2583 to Glu-2594. The segment at Pro-2602–Phe-2952 is inactive Condensation domain.

Homodimer. Each MAT domain from the lovB homodimer binds one lovC molecule to form the final active lovB-lovC megasynthase complex. Pantetheine 4'-phosphate is required as a cofactor.

The enzyme catalyses holo-[lovastatin nonaketide synthase] + 9 malonyl-CoA + S-adenosyl-L-methionine + 11 NADPH + 19 H(+) = dihydromonacolin L-[lovastatin nonaketide synthase] + S-adenosyl-L-homocysteine + 9 CO2 + 11 NADP(+) + 9 CoA + 6 H2O. It functions in the pathway polyketide biosynthesis; lovastatin biosynthesis. In terms of biological role, lovastatin nonaketide synthase; part of the gene cluster that mediates the biosynthesis of lovastatin (also known as mevinolin, mevacor or monacolin K), a hypolipidemic inhibitor of (3S)-hydroxymethylglutaryl-coenzyme A (HMG-CoA) reductase (HMGR). The first step in the biosynthesis of lovastatin is the production of dihydromonacolin L acid by the lovastatin nonaketide synthase lovB and the trans-acting enoyl reductase lovC (called the lovB-lovC megasynthase complex) via condensation of one acetyl-CoA unit and 8 malonyl-CoA units. The formation of the LovB/C complex is essential for the integrity of the catalytic chamber to the complete total synthesis of DML acid. Dihydromonacolin L acid is released from lovB by the thioesterase lovG. Next, dihydromonacolin L acid is oxidized by the dihydromonacolin L monooxygenase lovA twice to form monacolin J acid. The 2-methylbutyrate moiety of lovastatin is synthesized by the lovastatin diketide synthase lovF via condensation of one acetyl-CoA unit and one malonyl-CoA unit. Finally, the covalent attachment of this moiety to monacolin J acid is catalyzed by the transesterase lovD to yield lovastatin. LovD has broad substrate specificity and can also convert monacolin J to simvastatin using alpha-dimethylbutanoyl-S-methyl-3-mercaptopropionate (DMB-S-MMP) as the thioester acyl donor, and can also catalyze the reverse reaction and function as hydrolase in vitro. LovD has much higher activity with LovF-bound 2-methylbutanoate than with free diketide substrates. This is Lovastatin nonaketide synthase, polyketide synthase component from Aspergillus terreus.